The chain runs to 387 residues: Succinyl-diaminopimelate desuccinylase (387 aa).

Residue H75 participates in Zn(2+) binding. Residue D77 is part of the active site. D108 contributes to the Zn(2+) binding site. E139 functions as the Proton acceptor in the catalytic mechanism. Residues E140, E168, and H357 each contribute to the Zn(2+) site.

This sequence belongs to the peptidase M20A family. DapE subfamily. As to quaternary structure, homodimer. It depends on Zn(2+) as a cofactor. Requires Co(2+) as cofactor.

It carries out the reaction N-succinyl-(2S,6S)-2,6-diaminopimelate + H2O = (2S,6S)-2,6-diaminopimelate + succinate. It functions in the pathway amino-acid biosynthesis; L-lysine biosynthesis via DAP pathway; LL-2,6-diaminopimelate from (S)-tetrahydrodipicolinate (succinylase route): step 3/3. Catalyzes the hydrolysis of N-succinyl-L,L-diaminopimelic acid (SDAP), forming succinate and LL-2,6-diaminopimelate (DAP), an intermediate involved in the bacterial biosynthesis of lysine and meso-diaminopimelic acid, an essential component of bacterial cell walls. The sequence is that of Succinyl-diaminopimelate desuccinylase from Caulobacter sp. (strain K31).